Consider the following 413-residue polypeptide: 4-hydroxy-3-methylbut-2-en-1-yl diphosphate synthase (flavodoxin) (413 aa).

Positions 298, 301, 344, and 351 each coordinate [4Fe-4S] cluster.

This sequence belongs to the IspG family. Requires [4Fe-4S] cluster as cofactor.

The catalysed reaction is (2E)-4-hydroxy-3-methylbut-2-enyl diphosphate + oxidized [flavodoxin] + H2O + 2 H(+) = 2-C-methyl-D-erythritol 2,4-cyclic diphosphate + reduced [flavodoxin]. The protein operates within isoprenoid biosynthesis; isopentenyl diphosphate biosynthesis via DXP pathway; isopentenyl diphosphate from 1-deoxy-D-xylulose 5-phosphate: step 5/6. Functionally, converts 2C-methyl-D-erythritol 2,4-cyclodiphosphate (ME-2,4cPP) into 1-hydroxy-2-methyl-2-(E)-butenyl 4-diphosphate. This chain is 4-hydroxy-3-methylbut-2-en-1-yl diphosphate synthase (flavodoxin), found in Koribacter versatilis (strain Ellin345).